Consider the following 942-residue polypeptide: VPS35 endosomal protein sorting factor-like (942 aa).

The protein belongs to the VPS35L family. In terms of assembly, component of the heterotrimeric retriever complex.

Its subcellular location is the endosome. Functionally, acts as a component of the retriever complex. The retriever complex is a heterotrimeric complex related to retromer cargo-selective complex (CSC) and essential for retromer-independent retrieval and recycling of numerous cargos. The chain is VPS35 endosomal protein sorting factor-like from Drosophila melanogaster (Fruit fly).